A 116-amino-acid polypeptide reads, in one-letter code: Large ribosomal subunit protein bL19 (116 aa).

This sequence belongs to the bacterial ribosomal protein bL19 family.

Functionally, this protein is located at the 30S-50S ribosomal subunit interface and may play a role in the structure and function of the aminoacyl-tRNA binding site. The sequence is that of Large ribosomal subunit protein bL19 from Actinobacillus succinogenes (strain ATCC 55618 / DSM 22257 / CCUG 43843 / 130Z).